We begin with the raw amino-acid sequence, 143 residues long: MDWNAIQGILPHRYPFLLVDRVLEVEAGRRAVGQKNVSGNEWYFSGHFPGQPVMPGVLIMEALAQVGAVALLSLPEFQGRLALFGGMDRVRFRRQVVPGDVLRLETEIIKLKGRVGKGYGRAFVGEELAAEGELLFAVGEKIE.

H47 is an active-site residue.

It belongs to the thioester dehydratase family. FabZ subfamily.

Its subcellular location is the cytoplasm. The enzyme catalyses a (3R)-hydroxyacyl-[ACP] = a (2E)-enoyl-[ACP] + H2O. Functionally, involved in unsaturated fatty acids biosynthesis. Catalyzes the dehydration of short chain beta-hydroxyacyl-ACPs and long chain saturated and unsaturated beta-hydroxyacyl-ACPs. In Moorella thermoacetica (strain ATCC 39073 / JCM 9320), this protein is 3-hydroxyacyl-[acyl-carrier-protein] dehydratase FabZ.